Consider the following 262-residue polypeptide: Vibriobactin-specific 2,3-dihydro-2,3-dihydroxybenzoate dehydrogenase (262 aa).

12 to 36 (LLVGSARGIGFSVLEHLLQAGAQVM) is an NAD(+) binding site. Serine 145 is a binding site for substrate. Tyrosine 158 functions as the Proton acceptor in the catalytic mechanism.

This sequence belongs to the short-chain dehydrogenases/reductases (SDR) family.

The enzyme catalyses (2S,3S)-2,3-dihydroxy-2,3-dihydrobenzoate + NAD(+) = 2,3-dihydroxybenzoate + NADH + H(+). Its pathway is siderophore biosynthesis; vibriobactin biosynthesis. Its function is as follows. Involved in an early step of the biosynthesis of the catechol siderophore vibriobactin. Vibriobactin is a chelating compound involved in transporting iron from the bacterial environment into the cell cytoplasm. In Vibrio cholerae serotype O1 (strain ATCC 39315 / El Tor Inaba N16961), this protein is Vibriobactin-specific 2,3-dihydro-2,3-dihydroxybenzoate dehydrogenase (vibA).